A 369-amino-acid polypeptide reads, in one-letter code: Flagellar P-ring protein (369 aa).

The signal sequence occupies residues 1–22 (MTKFKHLLALAALLLAAGAAQA).

Belongs to the FlgI family. The basal body constitutes a major portion of the flagellar organelle and consists of four rings (L,P,S, and M) mounted on a central rod.

It localises to the periplasm. The protein localises to the bacterial flagellum basal body. Its function is as follows. Assembles around the rod to form the L-ring and probably protects the motor/basal body from shearing forces during rotation. The polypeptide is Flagellar P-ring protein (Pseudomonas aeruginosa (strain LESB58)).